Reading from the N-terminus, the 581-residue chain is Guanine nucleotide-binding protein-like 3 homolog (581 aa).

The span at 1-49 shows a compositional bias: basic residues; sequence MALKRLKTKKSKRLTGRLKHKIEKKVRDHNKKERRAAKKNPKKGSKKQK. Residues 1–50 form a disordered region; the sequence is MALKRLKTKKSKRLTGRLKHKIEKKVRDHNKKERRAAKKNPKKGSKKQKL. Positions 64–108 form a coiled coil; that stretch reads LKEVEEAKQRQEAERLARREAFKAEREQNKFKTLESMVEDADMRS. Serine 99 is modified (phosphoserine). The region spanning 141–325 is the CP-type G domain; the sequence is FKEFRKVIEN…LIDCPGIVFT (185 aa). Residues 189–192, 274–281, and 318–321 each bind GTP; these read NKAD, GIPNVGKS, and DCPG. The span at 500-517 shows a compositional bias: basic and acidic residues; that stretch reads KPAKGRKRKLDEEKEKVD. The tract at residues 500–519 is disordered; that stretch reads KPAKGRKRKLDEEKEKVDPS.

It belongs to the TRAFAC class YlqF/YawG GTPase family.

It localises to the nucleus. It is found in the nucleolus. In terms of biological role, may play a role in regulating cellular proliferation. The sequence is that of Guanine nucleotide-binding protein-like 3 homolog (Ns1) from Drosophila melanogaster (Fruit fly).